A 131-amino-acid polypeptide reads, in one-letter code: Small ribosomal subunit protein uS11 (131 aa).

It belongs to the universal ribosomal protein uS11 family. In terms of assembly, part of the 30S ribosomal subunit. Interacts with proteins S7 and S18. Binds to IF-3.

Functionally, located on the platform of the 30S subunit, it bridges several disparate RNA helices of the 16S rRNA. Forms part of the Shine-Dalgarno cleft in the 70S ribosome. The sequence is that of Small ribosomal subunit protein uS11 from Wolinella succinogenes (strain ATCC 29543 / DSM 1740 / CCUG 13145 / JCM 31913 / LMG 7466 / NCTC 11488 / FDC 602W) (Vibrio succinogenes).